A 208-amino-acid chain; its full sequence is Thiamine-phosphate synthase (208 aa).

Residues glutamine 37–lysine 41 and asparagine 73 each bind 4-amino-2-methyl-5-(diphosphooxymethyl)pyrimidine. Mg(2+) is bound by residues aspartate 74 and aspartate 93. 4-amino-2-methyl-5-(diphosphooxymethyl)pyrimidine is bound at residue serine 112. Position 139 to 141 (threonine 139 to serine 141) interacts with 2-[(2R,5Z)-2-carboxy-4-methylthiazol-5(2H)-ylidene]ethyl phosphate. Lysine 142 provides a ligand contact to 4-amino-2-methyl-5-(diphosphooxymethyl)pyrimidine. 2-[(2R,5Z)-2-carboxy-4-methylthiazol-5(2H)-ylidene]ethyl phosphate contacts are provided by residues glycine 171 and isoleucine 191 to serine 192.

It belongs to the thiamine-phosphate synthase family. Requires Mg(2+) as cofactor.

The enzyme catalyses 2-[(2R,5Z)-2-carboxy-4-methylthiazol-5(2H)-ylidene]ethyl phosphate + 4-amino-2-methyl-5-(diphosphooxymethyl)pyrimidine + 2 H(+) = thiamine phosphate + CO2 + diphosphate. It catalyses the reaction 2-(2-carboxy-4-methylthiazol-5-yl)ethyl phosphate + 4-amino-2-methyl-5-(diphosphooxymethyl)pyrimidine + 2 H(+) = thiamine phosphate + CO2 + diphosphate. The catalysed reaction is 4-methyl-5-(2-phosphooxyethyl)-thiazole + 4-amino-2-methyl-5-(diphosphooxymethyl)pyrimidine + H(+) = thiamine phosphate + diphosphate. The protein operates within cofactor biosynthesis; thiamine diphosphate biosynthesis; thiamine phosphate from 4-amino-2-methyl-5-diphosphomethylpyrimidine and 4-methyl-5-(2-phosphoethyl)-thiazole: step 1/1. Functionally, condenses 4-methyl-5-(beta-hydroxyethyl)thiazole monophosphate (THZ-P) and 2-methyl-4-amino-5-hydroxymethyl pyrimidine pyrophosphate (HMP-PP) to form thiamine monophosphate (TMP). The chain is Thiamine-phosphate synthase from Listeria welshimeri serovar 6b (strain ATCC 35897 / DSM 20650 / CCUG 15529 / CIP 8149 / NCTC 11857 / SLCC 5334 / V8).